A 318-amino-acid chain; its full sequence is HPr kinase/phosphorylase (318 aa).

Residues H143 and K164 contribute to the active site. 158–165 lines the ATP pocket; the sequence is GKSGVGKS. Residue S165 participates in Mg(2+) binding. Residue D182 is the Proton acceptor; for phosphorylation activity. Proton donor; for dephosphorylation activity of the active site. Residues 206–215 are important for the catalytic mechanism of both phosphorylation and dephosphorylation; sequence MEIRGLGILN. Position 207 (E207) interacts with Mg(2+). R248 is a catalytic residue. Positions 269–274 are important for the catalytic mechanism of dephosphorylation; that stretch reads PVKPGR.

Belongs to the HPrK/P family. As to quaternary structure, homohexamer. It depends on Mg(2+) as a cofactor.

It catalyses the reaction [HPr protein]-L-serine + ATP = [HPr protein]-O-phospho-L-serine + ADP + H(+). It carries out the reaction [HPr protein]-O-phospho-L-serine + phosphate + H(+) = [HPr protein]-L-serine + diphosphate. Catalyzes the ATP- as well as the pyrophosphate-dependent phosphorylation of a specific serine residue in HPr, a phosphocarrier protein of the phosphoenolpyruvate-dependent sugar phosphotransferase system (PTS). HprK/P also catalyzes the pyrophosphate-producing, inorganic phosphate-dependent dephosphorylation (phosphorolysis) of seryl-phosphorylated HPr (P-Ser-HPr). In Leptospira borgpetersenii serovar Hardjo-bovis (strain JB197), this protein is HPr kinase/phosphorylase.